A 1114-amino-acid chain; its full sequence is Zinc finger E-box-binding homeobox 1 (1114 aa).

Disordered stretches follow at residues 1-105 (MADG…EVGC) and 142-163 (APEEDQRQGTPEASGQDENGTP). Residues 15–30 (PRRNNVTNYNNVIEAN) are compositionally biased toward low complexity. The segment covering 149-160 (QGTPEASGQDEN) has biased composition (polar residues). 3 C2H2-type zinc fingers span residues 170–193 (LTCPYCDRGYKRFTSLKEHIKYRH), 200–222 (FSCSLCSYTFAYRTQLDRHMTSH), and 240–262 (FKCTECGKAFKYKHHLKEHLRIH). A C2H2-type 4; atypical zinc finger spans residues 268-292 (YECPNCKKRFSHSGSYSSHISSKKC). 4 disordered regions span residues 304-326 (SGLKTSQCSSPSLSASPGSPARP), 491-529 (NLKKEHSVPTNSCKNEKLPEDLTVKSEKDKNFEGETNDS), 553-588 (KNPPQLPQSSGTEAEKPSSPAPSETGENNLSPGQPP), and 636-716 (QISV…SRNS). Residues 309 to 326 (SQCSSPSLSASPGSPARP) show a composition bias toward low complexity. Residues 504-523 (KNEKLPEDLTVKSEKDKNFE) show a composition bias toward basic and acidic residues. Composition is skewed to polar residues over residues 573–584 (APSETGENNLSP) and 636–681 (QISV…QNPA). A DNA-binding region (homeobox; atypical) is located at residues 581–640 (NLSPGQPPLKNLLSLLKAYYALNAQPSAEELSKIADSVNLPLDVVKKWFEKMQAGQISVQ). Residues 682-716 (NTSKSQTSSGGSTQNGSRSSTPSPSPLNLSSSRNS) are compositionally biased toward low complexity. The short motif at 767–771 (PLNLT) is the CTBP-binding motif element. 2 stretches are compositionally biased toward polar residues: residues 852–866 (AVQETPPKQTQANGS) and 874–890 (SSEGVSNVEDQNDSDST). A disordered region spans residues 852-898 (AVQETPPKQTQANGSQDERQDTSSEGVSNVEDQNDSDSTPPKKKMRK). 2 consecutive C2H2-type zinc fingers follow at residues 904–926 (YACDLCDKIFQKSSSLLRHKYEH) and 932–954 (HECGICKKAFKHKHHLIEHMRLH). The segment at 960 to 981 (YQCDKCGKRFSHSGSYSQHMNH) adopts a C2H2-type 7; atypical zinc-finger fold. A disordered region spans residues 989–1114 (EAEERDSTEQ…QVSEEKTNKA (126 aa)). The segment covering 1031-1047 (EEEEDSEKEEEEEEEKD) has biased composition (acidic residues). Residues 1048-1062 (VEGLQEEKECRKLQD) are compositionally biased toward basic and acidic residues. Acidic residues predominate over residues 1063–1078 (VEEEEEVEEEEEEEEG). Over residues 1079 to 1089 (KTEGNKNDDVV) the composition is skewed to basic and acidic residues.

This sequence belongs to the delta-EF1/ZFH-1 C2H2-type zinc-finger family. In terms of tissue distribution, expression is developmentally regulated with high expression in mesoderm, nervous system and lens.

Its subcellular location is the nucleus. Acts as a transcriptional repressor. Positively regulates neuronal differentiation. Represses transcription by binding to the E box-containing promoter. Binds to delta 1-crystallin enhancer core and represses lens-specific transcription. It also binds many other non-lens specific DNA sequences. This Gallus gallus (Chicken) protein is Zinc finger E-box-binding homeobox 1 (ZEB1).